Here is a 328-residue protein sequence, read N- to C-terminus: Putative UDP-N-acetylglucosamine--dolichyl-phosphate N-acetylglucosaminephosphotransferase (328 aa).

Helical transmembrane passes span 1 to 21 (MLVSLLGILLSVIVGFVVTLI), 48 to 68 (VPVLGGIGIVAGFVAGSFTFL), 78 to 98 (IENVVVSILLSSLIIGFLGLL), 107 to 127 (ATRAFLPIFASIPLILYSVGH), 129 to 149 (IISIPFLGKVNFGILFYIIIL), 166 to 186 (LNGLGAGMGLIMALALAYIGL), 192 to 212 (SFYAGIVSIILASVLFGFLIF), 228 to 248 (FIGSVIGSIGISGYMYTALFF), and 301 to 321 (YHIVLIIWGIEILFAILAVVF).

Belongs to the glycosyltransferase 4 family.

It localises to the cell membrane. It catalyses the reaction a di-trans,poly-cis-dolichyl phosphate + UDP-N-acetyl-alpha-D-glucosamine = an N-acetyl-alpha-D-glucosaminyl-diphospho-di-trans,poly-cis-dolichol + UMP. With respect to regulation, inhibited by tunicamycin. This is Putative UDP-N-acetylglucosamine--dolichyl-phosphate N-acetylglucosaminephosphotransferase (gnpTA) from Sulfolobus acidocaldarius (strain ATCC 33909 / DSM 639 / JCM 8929 / NBRC 15157 / NCIMB 11770).